Consider the following 726-residue polypeptide: Pre-mRNA-splicing factor CLF1 (726 aa).

16 HAT repeats span residues 55 to 87 (EFQA…WEAS), 89 to 121 (NEYE…MELK), 123 to 155 (RNIN…LEEL), 157 to 188 (LNVS…LEER), 190 to 221 (NELD…FEED), 223 to 262 (GQPD…METR), 264 to 298 (KEFE…FEKQ), 308 to 340 (TVLG…LEED), 352 to 386 (VEPM…LWLQ), 396 to 432 (KDYD…FEIR), 434 to 465 (LDVS…LEMR), 467 to 499 (REFD…VESA), 501 to 534 (EDFE…FEAG), 536 to 567 (GERE…MEIA), 585 to 626 (GDAD…EHGD), and 635 to 667 (DMLP…DDER). The segment at 682–726 (AWAQQRAGQGEEGGLSYDLPSDSEDENEDGDEDGDGREEEGMDQD) is disordered. Acidic residues predominate over residues 702 to 726 (SDSEDENEDGDEDGDGREEEGMDQD).

It belongs to the crooked-neck family. Associated with the spliceosome.

It is found in the nucleus. In terms of biological role, involved in pre-mRNA splicing and cell cycle progression. Required for the spliceosome assembly and initiation of the DNA replication. The chain is Pre-mRNA-splicing factor CLF1 (CLF1) from Cryptococcus neoformans var. neoformans serotype D (strain B-3501A) (Filobasidiella neoformans).